A 385-amino-acid polypeptide reads, in one-letter code: Deoxyguanosinetriphosphate triphosphohydrolase-like protein (385 aa).

Positions 75–197 (RLTHTLEVGQ…VDAADALAYT (123 aa)) constitute an HD domain.

Belongs to the dGTPase family. Type 2 subfamily.

The polypeptide is Deoxyguanosinetriphosphate triphosphohydrolase-like protein (Deinococcus geothermalis (strain DSM 11300 / CIP 105573 / AG-3a)).